The chain runs to 303 residues: Probable cell division protein WhiA (303 aa).

The segment at residues 272–303 (SIQQIADSIEPPLTKSGVNHRLRKINKIADDL) is a DNA-binding region (H-T-H motif).

Belongs to the WhiA family.

Involved in cell division and chromosome segregation. This is Probable cell division protein WhiA from Streptococcus thermophilus (strain ATCC BAA-250 / LMG 18311).